The sequence spans 727 residues: Prolyl endopeptidase-like (727 aa).

M1 carries the N-acetylmethionine modification. Catalysis depends on charge relay system residues S559, D645, and H690.

Belongs to the peptidase S9A family. In terms of assembly, homodimer. Interacts with the AP-1 complex. In terms of tissue distribution, expressed in pyramidal neurons of the temporal cortex and neocortex (at protein level). Widely expressed. Expressed at higher level in brain, skeletal muscle, heart and kidney. Expressed at the endplates in the neuromuscular junction.

The protein resides in the cytoplasm. The protein localises to the cytosol. It localises to the golgi apparatus. It is found in the trans-Golgi network. Its subcellular location is the cytoskeleton. The protein resides in the nucleus. With respect to regulation, inhibited by PMSF and Prefabloc, as well as leupeptin at high concentrations. Partially inhibited by TPCK, a chymotrypsin inhibitor and E64, a cysteine protease inhibitor. Not affected by 4-amidinophenyl-methanesulfonyl fluoride (APMSF), pepstatin or EDTA. Inhibited by 1-isobutyl-3-oxo-3,5,6,7-tetrahydro-2H-cyclopenta[c]pyridine-4-carbonitrile. Its function is as follows. Serine peptidase whose precise substrate specificity remains unclear. Does not cleave peptides after a arginine or lysine residue. Regulates trans-Golgi network morphology and sorting by regulating the membrane binding of the AP-1 complex. May play a role in the regulation of synaptic vesicle exocytosis. This Homo sapiens (Human) protein is Prolyl endopeptidase-like (PREPL).